Reading from the N-terminus, the 464-residue chain is Endo-1,4-beta-xylanase A (464 aa).

A signal peptide spans 1 to 33; it reads MFRHHPTRGRRTAGLLAAALATLSAGLTAVAPA. A GH10 domain is found at 40 to 349; the sequence is TATLGELAEA…KPAYHAIAAA (310 aa). Glutamate 166 (proton donor) is an active-site residue. Glutamate 271 serves as the catalytic Nucleophile. The CBM2 domain maps to 354-457; the sequence is SPAPGGNCTA…TPADVTCTPG (104 aa).

Belongs to the glycosyl hydrolase 10 (cellulase F) family. The cofactor is Does not require any standard metal (Mg(2+), Mn2(+), Ca(2+))..

The enzyme catalyses Endohydrolysis of (1-&gt;4)-beta-D-xylosidic linkages in xylans.. It functions in the pathway glycan degradation; xylan degradation. With respect to regulation, completely inhibited by Hg(2+), unaffected by EDTA. In terms of biological role, contributes to hydrolysis of hemicellulose, the major component of plant cell-walls. Hydrolyzes xylan to xylose and xylobiose. In Streptomyces sp, this protein is Endo-1,4-beta-xylanase A (xynAS9).